A 272-amino-acid chain; its full sequence is Alcohol dehydrogenase-related 31 kDa protein (272 aa).

Residue 11–34 (YVADCGGIALETSKVLMTKNIAKL) coordinates NAD(+). Serine 139 lines the substrate pocket. Tyrosine 152 (proton acceptor) is an active-site residue.

The protein belongs to the short-chain dehydrogenases/reductases (SDR) family.

The protein is Alcohol dehydrogenase-related 31 kDa protein (Adhr) of Drosophila melanogaster (Fruit fly).